The chain runs to 698 residues: Iron-sulfur clusters transporter ATM1, mitochondrial (698 aa).

A mitochondrion-targeting transit peptide spans 1–23 (MIPQLLQRSSRACPRYNPALYRL). The Mitochondrial matrix portion of the chain corresponds to 24 to 113 (STTSQQRPGL…PKDDWGTKLR (90 aa)). The tract at residues 32–63 (GLTQTFWTSAPRREQPRTPTDSKPTTTKPSAV) is disordered. The segment covering 48–61 (RTPTDSKPTTTKPS) has biased composition (low complexity). The chain crosses the membrane as a helical span at residues 114–135 (VSLAVSLLIGAKVLNVQVPFYF). In terms of domain architecture, ABC transmembrane type-1 spans 114–404 (VSLAVSLLIG…LGSVYRELRQ (291 aa)). Residues 136–158 (KSIVDSMNIDVAAVGGTATTVAG) lie on the Mitochondrial intermembrane side of the membrane. A helical membrane pass occupies residues 159-182 (AMILAYGASRIGATVFQELRNAVF). At 183-231 (ASVAQNAIRKVACNVFDHLLRLDLTFHLSKQTGGLTRALDRGTKGISFI) the chain is on the mitochondrial matrix side. A helical transmembrane segment spans residues 232–255 (LSSMVFHVLPTALEISMVCGILTY). Residue N256 is a topological domain, mitochondrial intermembrane. A helical transmembrane segment spans residues 257-277 (YGAKFAALTVLTMVSYTAFTI). Residues 278 to 343 (WTTAWRTKFR…NSIKVATSLA (66 aa)) lie on the Mitochondrial matrix side of the membrane. Glutathione is bound by residues 283–287 (RTKFR) and 346–349 (NSGQ). Residues 344 to 362 (LLNSGQNIIFSSALTGMMY) form a helical membrane-spanning segment. Topologically, residues 363 to 377 (LAANGVAEGTLTVGD) are mitochondrial intermembrane. Residues 378 to 399 (LVMVNQLVFQLSVPLNFLGSVY) form a helical membrane-spanning segment. G396 contacts glutathione. Topologically, residues 400-698 (RELRQSLLDM…EEENDEQKKN (299 aa)) are mitochondrial matrix. An ABC transporter domain is found at 439-675 (IKFENVNFAY…DGVYAELWSA (237 aa)). Residues Y448 and 472 to 483 (GPSGCGKSTLLR) contribute to the ATP site. Residues 679–698 (MFGEDGKEKSEEENDEQKKN) form a disordered region. Residues 682-698 (EDGKEKSEEENDEQKKN) show a composition bias toward basic and acidic residues.

The protein belongs to the ABC transporter superfamily. ABCB family. Heavy Metal importer (TC 3.A.1.210) subfamily. Homodimer.

It is found in the mitochondrion inner membrane. Functionally, performs an essential function in the generation of cytoplasmic iron-sulfur proteins by mediating the ATP-dependent export of Fe/S cluster precursors synthesized by NFS1 and other mitochondrial proteins. Hydrolyzes ATP. Binds glutathione and may function by transporting a glutathione-conjugated iron-sulfur compound. The protein is Iron-sulfur clusters transporter ATM1, mitochondrial of Gibberella zeae (strain ATCC MYA-4620 / CBS 123657 / FGSC 9075 / NRRL 31084 / PH-1) (Wheat head blight fungus).